The chain runs to 278 residues: UPF0761 membrane protein CBU_1578 (278 aa).

7 helical membrane passes run 38-58 (LLAL…VPAF), 68-88 (LIWE…LSQL), 92-112 (VTGL…LLMY), 134-154 (FLIY…VMLL), 177-197 (LLFV…NWVL), 207-227 (AVIG…AFTV), and 244-264 (VIPI…LGAV).

The protein belongs to the UPF0761 family.

The protein resides in the cell inner membrane. This Coxiella burnetii (strain RSA 493 / Nine Mile phase I) protein is UPF0761 membrane protein CBU_1578.